The sequence spans 262 residues: Thiazole synthase (262 aa).

Lys97 serves as the catalytic Schiff-base intermediate with DXP. 1-deoxy-D-xylulose 5-phosphate contacts are provided by residues Gly158, Ala185 to Gly186, and Asn207 to Thr208.

Belongs to the ThiG family. As to quaternary structure, homotetramer. Forms heterodimers with either ThiH or ThiS.

The protein localises to the cytoplasm. The enzyme catalyses [ThiS sulfur-carrier protein]-C-terminal-Gly-aminoethanethioate + 2-iminoacetate + 1-deoxy-D-xylulose 5-phosphate = [ThiS sulfur-carrier protein]-C-terminal Gly-Gly + 2-[(2R,5Z)-2-carboxy-4-methylthiazol-5(2H)-ylidene]ethyl phosphate + 2 H2O + H(+). Its pathway is cofactor biosynthesis; thiamine diphosphate biosynthesis. In terms of biological role, catalyzes the rearrangement of 1-deoxy-D-xylulose 5-phosphate (DXP) to produce the thiazole phosphate moiety of thiamine. Sulfur is provided by the thiocarboxylate moiety of the carrier protein ThiS. In vitro, sulfur can be provided by H(2)S. This is Thiazole synthase from Neisseria gonorrhoeae (strain ATCC 700825 / FA 1090).